The primary structure comprises 311 residues: Cytochrome f (311 aa).

The N-terminal stretch at 1 to 27 (MKHFFKSLTLAIALAASVLFWSPQAQA) is a signal peptide. 4 residues coordinate heme: tyrosine 28, cysteine 48, cysteine 51, and histidine 52. Residues 279-296 (WLLVFFAAITLSQILLVL) form a helical membrane-spanning segment.

Belongs to the cytochrome f family. In terms of assembly, the 4 large subunits of the cytochrome b6-f complex are cytochrome b6, subunit IV (17 kDa polypeptide, PetD), cytochrome f and the Rieske protein, while the 4 small subunits are PetG, PetL, PetM and PetN. The complex functions as a dimer. Heme serves as cofactor.

It is found in the cellular thylakoid membrane. In terms of biological role, component of the cytochrome b6-f complex, which mediates electron transfer between photosystem II (PSII) and photosystem I (PSI), cyclic electron flow around PSI, and state transitions. The chain is Cytochrome f from Synechococcus elongatus.